Reading from the N-terminus, the 92-residue chain is Small ribosomal subunit protein uS19 (92 aa).

The protein belongs to the universal ribosomal protein uS19 family.

Protein S19 forms a complex with S13 that binds strongly to the 16S ribosomal RNA. The protein is Small ribosomal subunit protein uS19 of Treponema denticola (strain ATCC 35405 / DSM 14222 / CIP 103919 / JCM 8153 / KCTC 15104).